The sequence spans 222 residues: Collectrin (222 aa).

The N-terminal stretch at 1 to 14 (MLWLLFFLVTAIHA) is a signal peptide. The Extracellular portion of the chain corresponds to 15 to 141 (DLCRPDAENA…LAPPTDPSVP (127 aa)). In terms of domain architecture, Collectrin-like spans 21-222 (AENAFKVRLS…VTEDERLTPL (202 aa)). N-linked (GlcNAc...) asparagine glycans are attached at residues asparagine 76 and asparagine 93. Residues 142–162 (IWIIIFGVIFCIVLVATMLLI) form a helical membrane-spanning segment. The Cytoplasmic portion of the chain corresponds to 163–222 (ISGIRQHRRKNKGPSEMEDSEDKCENVITIENGIPCDPLDMKGGHINDAFVTEDERLTPL). Threonine 214 and threonine 220 each carry phosphothreonine.

The protein belongs to the CLTRN family. Monomer. Homodimer; dimerization prevents CLTRN cleavage by BACE2. Interacts with SLC6A18; this interaction regulates the trafficking of SLC6A18 to the cell membrane and its amino acid transporter activity. Interacts with SLC6A19; this interaction regulates the trafficking of SLC6A19 to the cell membrane and its amino acid transporter activity. Interacts with SNAPIN. Post-translationally, glycosylated. Glycosylation is required for plasma membrane localization and for its cleavage by BACE2. In terms of processing, proteolytically processed in pancreatic beta cells by BACE2 leading to the generation and extracellular release of soluble CLTRN, and a corresponding cell-associated C-terminal fragment which is later cleaved by gamma-secretase. This shedding process inactivates CLTRN. Three cleavage sites have been identified for BACE2, two clustered sites after Phe-116 and Leu-118 and a more membrane proximal site at Phe-125; the preferred BACE2 cleavage site seems to be between Phe-125 and Leu-126, Phe-116 and Leu-118 act as alternative sites.

It localises to the cell membrane. Its function is as follows. Plays an important role in amino acid transport by acting as binding partner of amino acid transporters SLC6A18 and SLC6A19, regulating their trafficking on the cell surface and their activity. May also play a role in trafficking of amino acid transporters SLC3A1 and SLC7A9 to the renal cortical cell membrane. Regulator of SNARE complex function. Stimulator of beta cell replication. The polypeptide is Collectrin (CLTRN) (Bos taurus (Bovine)).